A 468-amino-acid chain; its full sequence is Acid phosphatase PHO1 (468 aa).

Residues 1–22 (MFSPILSLEIILALATLQSVFA) form the signal peptide. Histidine 84 functions as the Nucleophile in the catalytic mechanism. Asparagine 163, asparagine 196, asparagine 256, and asparagine 321 each carry an N-linked (GlcNAc...) asparagine glycan. The active-site Proton donor is the aspartate 346. 2 N-linked (GlcNAc...) asparagine glycosylation sites follow: asparagine 360 and asparagine 453.

Belongs to the histidine acid phosphatase family.

The enzyme catalyses a phosphate monoester + H2O = an alcohol + phosphate. The polypeptide is Acid phosphatase PHO1 (PHO1) (Komagataella pastoris (Yeast)).